The chain runs to 2176 residues: Nipped-B-like protein scc-2 (2176 aa).

Over residues Met1 to Ala25 the composition is skewed to polar residues. 7 disordered regions span residues Met1–Gly27, Pro150–Ser170, Ser464–Gly483, Met495–Lys514, Tyr523–Asp551, Gln585–Arg615, and Asp669–Glu708. Residues Ser464–Thr473 are compositionally biased toward low complexity. Composition is skewed to basic and acidic residues over residues Glu597–Arg615 and Ser685–Glu695. Over residues Asn696–Glu708 the composition is skewed to acidic residues. HEAT repeat units follow at residues Asp1280–Ala1312, Glu1320–Tyr1351, Glu1353–Lys1388, Glu1393–Gln1426, Glu1692–Gln1723, Gln1803–Gln1834, and Gly1840–Lys1871. The disordered stretch occupies residues Ile2149–His2176. Over residues Asp2154–Gly2163 the composition is skewed to acidic residues.

This sequence belongs to the SCC2/Nipped-B family. May heterodimerize with mau-2/SCC4 to form the cohesin loading complex.

It is found in the nucleus. It localises to the chromosome. Plays an important role in the loading of the cohesin complex on to meiotic chromosomes. Forms a heterodimeric complex (also known as cohesin loading complex) with mau-2/SCC4 which mediates the loading of the cohesin complex onto chromatin. Plays an essential role in cell division during embryonic development. Promotes normal chromosome organization during meiosis. Required for the assembly of the synaptonemal complex between homologous chromosomes to promote sister chromatid cohesion during meiosis. Required for chromosome segregation during mitosis and meiosis. Plays a role in DNA double-strand break (DSB) repair during meiotic recombination and promotes the assembly of the 9-1-1 cell-cycle checkpoint response complex which is required for inducing apoptosis in response to DNA damage, at DNA damage sites. This Caenorhabditis elegans protein is Nipped-B-like protein scc-2.